The primary structure comprises 257 residues: Acetylglutamate kinase (257 aa).

Substrate contacts are provided by residues Gly43 to Gly44, Arg65, and Asn157. ATP-binding positions include Asp180 to Leu185 and Ile208 to Thr210.

Belongs to the acetylglutamate kinase family. ArgB subfamily. Homodimer.

The protein resides in the cytoplasm. The catalysed reaction is N-acetyl-L-glutamate + ATP = N-acetyl-L-glutamyl 5-phosphate + ADP. Its pathway is amino-acid biosynthesis; L-arginine biosynthesis; N(2)-acetyl-L-ornithine from L-glutamate: step 2/4. Functionally, catalyzes the ATP-dependent phosphorylation of N-acetyl-L-glutamate. The polypeptide is Acetylglutamate kinase (Buchnera aphidicola subsp. Acyrthosiphon pisum (strain Tuc7)).